We begin with the raw amino-acid sequence, 336 residues long: NEDD4 family-interacting protein 2 (336 aa).

Disordered stretches follow at residues Met1–Pro24 and Ser37–Val156. The Cytoplasmic portion of the chain corresponds to Met1–Gly231. Residues Ser37–Glu48 show a composition bias toward low complexity. Basic and acidic residues predominate over residues Glu78 to Gln99. The tract at residues Pro148–Tyr151 is interaction with NEDD4. The PPxY motif 1 signature appears at Pro148 to Tyr151. Residues Tyr151, Tyr167, Tyr171, and Tyr177 each carry the phosphotyrosine; by SRC modification. 2 short sequence motifs (PPxY motif) span residues Pro174–Tyr177 and Pro184–Tyr186. A helical membrane pass occupies residues Ile232–Phe252. Residues Cys253–Thr257 are Extracellular-facing. The chain crosses the membrane as a helical span at residues Ile258 to Ile278. Topologically, residues Val279–Gly287 are cytoplasmic. The chain crosses the membrane as a helical span at residues Tyr288–Phe308. Topologically, residues Arg309 to Leu336 are extracellular.

Forms heterodimers with NDFIP1. Interacts with HECT domain-containing E3 ubiquitin-protein ligases, including NEDD4. Interacts with NEDD4L. Interacts with PTEN. When phosphorylated at Tyr-167, interacts with SRC and LYN SH2 domain. May thus act as a scaffold that recruits SRC to NDFIP1, enhancing NDFIP1 phosphorylation. Interacts with SLC11A2/DMT1. May interact with phosphorylated EGFR. Interacts with KCNH2. In terms of processing, ubiquitinated by NEDD4 and ITCH. Also ubiquitinated by NEDD4L. Ubiquitination by NEDD4 or NEDD4L does not affect turnover. Undergoes transient tyrosine-phosphorylation following EGF stimulation, most probably catalyzed by SRC. Phosphorylation on Tyr-151, Tyr-171 and Tyr-177 are dependent on the phosphorylation on Tyr-167. Also phosphorylated by LYN and FYN. As to expression, expressed in brain, lung, heart, skeletal muscle, kidney, liver and placenta.

The protein resides in the endosome membrane. Its subcellular location is the golgi apparatus membrane. It localises to the endosome. The protein localises to the multivesicular body membrane. In terms of biological role, activates HECT domain-containing E3 ubiquitin-protein ligases, including ITCH, NEDD4, NEDD4L, SMURF2, WWP1 and WWP2, and consequently modulates the stability of their targets. As a result, may control many cellular processes. Recruits ITCH, NEDD4 and SMURF2 to endosomal membranes. Negatively regulates KCNH2 potassium channel activity by decreasing its cell-surface expression and interfering with channel maturation through recruitment of NEDD4L to the Golgi apparatus and multivesicular body where it mediates KCNH2 degradation. May modulate EGFR signaling. Together with NDFIP1, limits the cytokine signaling and expansion of effector Th2 T-cells by promoting degradation of JAK1, probably by ITCH- and NEDD4L-mediated ubiquitination. The sequence is that of NEDD4 family-interacting protein 2 (NDFIP2) from Homo sapiens (Human).